Consider the following 243-residue polypeptide: tRNA (guanine-N(1)-)-methyltransferase (243 aa).

S-adenosyl-L-methionine is bound by residues Gly111 and 131–136 (IGDYVL).

It belongs to the RNA methyltransferase TrmD family. Homodimer.

It is found in the cytoplasm. The enzyme catalyses guanosine(37) in tRNA + S-adenosyl-L-methionine = N(1)-methylguanosine(37) in tRNA + S-adenosyl-L-homocysteine + H(+). Specifically methylates guanosine-37 in various tRNAs. This chain is tRNA (guanine-N(1)-)-methyltransferase, found in Brevibacillus brevis (strain 47 / JCM 6285 / NBRC 100599).